We begin with the raw amino-acid sequence, 302 residues long: Ornithine carbamoyltransferase (302 aa).

Residues 52-55 (STRT), glutamine 79, arginine 103, and 130-133 (HPCQ) contribute to the carbamoyl phosphate site. L-ornithine-binding positions include asparagine 161, aspartate 221, and 225 to 226 (SM). Carbamoyl phosphate-binding positions include 261–262 (CL) and arginine 289.

The protein belongs to the aspartate/ornithine carbamoyltransferase superfamily. OTCase family.

It localises to the cytoplasm. It carries out the reaction carbamoyl phosphate + L-ornithine = L-citrulline + phosphate + H(+). Its pathway is amino-acid biosynthesis; L-arginine biosynthesis; L-arginine from L-ornithine and carbamoyl phosphate: step 1/3. In terms of biological role, reversibly catalyzes the transfer of the carbamoyl group from carbamoyl phosphate (CP) to the N(epsilon) atom of ornithine (ORN) to produce L-citrulline. This chain is Ornithine carbamoyltransferase, found in Methanospirillum hungatei JF-1 (strain ATCC 27890 / DSM 864 / NBRC 100397 / JF-1).